Reading from the N-terminus, the 192-residue chain is UPF0149 protein KPK_0755 (192 aa).

It belongs to the UPF0149 family.

This is UPF0149 protein KPK_0755 from Klebsiella pneumoniae (strain 342).